Here is a 106-residue protein sequence, read N- to C-terminus: uncharacterized protein (106 aa).

4 helical membrane passes run 3–23 (WFLL…MKYI), 29–49 (KWPI…LSQA), 50–70 (MIVL…SIGV), and 82–102 (FQLS…GLRL).

The protein belongs to the drug/metabolite transporter (DMT) superfamily. Small multidrug resistance (SMR) (TC 2.A.7.1) family.

It is found in the cell membrane. This is an uncharacterized protein from Bacillus subtilis (strain 168).